The primary structure comprises 139 residues: ATP synthase epsilon chain (139 aa).

Belongs to the ATPase epsilon chain family. F-type ATPases have 2 components, CF(1) - the catalytic core - and CF(0) - the membrane proton channel. CF(1) has five subunits: alpha(3), beta(3), gamma(1), delta(1), epsilon(1). CF(0) has three main subunits: a, b and c.

The protein localises to the cell inner membrane. In terms of biological role, produces ATP from ADP in the presence of a proton gradient across the membrane. This is ATP synthase epsilon chain from Nitrosospira multiformis (strain ATCC 25196 / NCIMB 11849 / C 71).